Here is a 170-residue protein sequence, read N- to C-terminus: Neurotensin/neuromedin N (170 aa).

A signal peptide spans 1-23 (MMAGMKIQLVCMILLAFSSWSLC).

This sequence belongs to the neurotensin family. Interacts with NTSR1. Interacts with SORT1. Interacts with SORL1. Neurotensin is cleaved and degraded by Angiotensin-converting enzyme (ACE) and neprilysin (MME).

It localises to the secreted. The protein localises to the cytoplasmic vesicle. Its subcellular location is the secretory vesicle. In terms of biological role, neurotensin may play an endocrine or paracrine role in the regulation of fat metabolism. It causes contraction of smooth muscle. The protein is Neurotensin/neuromedin N (NTS) of Canis lupus familiaris (Dog).